A 384-amino-acid polypeptide reads, in one-letter code: 23S rRNA (uracil(747)-C(5))-methyltransferase RlmC (384 aa).

[4Fe-4S] cluster contacts are provided by Cys-7, Cys-15, Cys-18, and Cys-94. The S-adenosyl-L-methionine site is built by Gln-219, Phe-248, Glu-269, and Asn-316. Cys-343 (nucleophile) is an active-site residue.

The protein belongs to the class I-like SAM-binding methyltransferase superfamily. RNA M5U methyltransferase family. RlmC subfamily.

The catalysed reaction is uridine(747) in 23S rRNA + S-adenosyl-L-methionine = 5-methyluridine(747) in 23S rRNA + S-adenosyl-L-homocysteine + H(+). In terms of biological role, catalyzes the formation of 5-methyl-uridine at position 747 (m5U747) in 23S rRNA. The protein is 23S rRNA (uracil(747)-C(5))-methyltransferase RlmC of Shewanella sp. (strain MR-7).